The sequence spans 149 residues: Alpha-crystallin A chain (149 aa).

Positions 28-138 (LLRGFMDSGI…SHSERPIPVS (111 aa)) constitute a sHSP domain. 6 residues coordinate Zn(2+): His55, His76, Glu78, His83, His91, and His130. The segment at 125 to 149 (NLVSSHSERPIPVSREEKPTSAPSS) is disordered. Residues 130 to 143 (HSERPIPVSREEKP) show a composition bias toward basic and acidic residues. Ser138 carries an O-linked (GlcNAc) serine glycan.

It belongs to the small heat shock protein (HSP20) family. In terms of assembly, heteropolymer composed of three CRYAA and one CRYAB subunits. Inter-subunit bridging via zinc ions enhances stability, which is crucial as there is no protein turn over in the lens. Can also form homodimers and homotetramers (dimers of dimers) which serve as the building blocks of homooligomers. Within homooligomers, the zinc-binding motif is created from residues of 3 different molecules. His-76 and Glu-78 from one molecule are ligands of the zinc ion, and His-83 and His-130 residues from additional molecules complete the site with tetrahedral coordination geometry.

It localises to the cytoplasm. The protein resides in the nucleus. Contributes to the transparency and refractive index of the lens. May act as a chaperone, preventing aggregation of various proteins under a wide range of stress conditions. This Rana temporaria (European common frog) protein is Alpha-crystallin A chain (CRYAA).